A 426-amino-acid polypeptide reads, in one-letter code: MTISEELFSRAQQHIPGGVNSPVRAFRGVGGAPVFFSKGEGAYLYDEDGKRYIDYVGSWGPMILGHAHPDVRQALERQLANGLGFGAPTRIEIDMAEKVCELVPSIEMVRMVNSGTEATMSAIRLARGFTGRDKIVKFEGCYHGHADSLLVKAGSGALTLGIPDSPGVPASVAEHTLTLTYNDAIMVREVFARHGDEIAAIIVEPVAGNMNCIPPEPGFLETLRAVCDEHGSLLIFDEVMTGFRVALGGAQQVYGVKPDLTTLGKVIGAGLPVGAFGGRRDVMSHIAPLGPVYQAGTLSGNPLAMACGLTMLNKISEPGFYDALAAKTEALAKGLQERAQAAGVPLTINQVGGMFGFFFSEEKKVSRFEQVTRCDLERFRKFYHGMLDKGVYLAPSAYEAGFVSAAHSDEDIQATLDAASSLFASM.

Lys-265 carries the N6-(pyridoxal phosphate)lysine modification.

This sequence belongs to the class-III pyridoxal-phosphate-dependent aminotransferase family. HemL subfamily. Homodimer. Pyridoxal 5'-phosphate serves as cofactor.

It is found in the cytoplasm. The catalysed reaction is (S)-4-amino-5-oxopentanoate = 5-aminolevulinate. It functions in the pathway porphyrin-containing compound metabolism; protoporphyrin-IX biosynthesis; 5-aminolevulinate from L-glutamyl-tRNA(Glu): step 2/2. The protein is Glutamate-1-semialdehyde 2,1-aminomutase of Hahella chejuensis (strain KCTC 2396).